The sequence spans 83 residues: FMRFamide-like neuropeptide 23 (83 aa).

The first 24 residues, 1 to 24, serve as a signal peptide directing secretion; that stretch reads MLLPKISILLYILVVLQETAAVRG. A propeptide spanning residues 25–36 is cleaved from the precursor; the sequence is ALFRSGRAVPFE. Phe47 carries the phenylalanine amide modification. Positions 50–83 are excised as a propeptide; sequence AGMASGVGGGSEGGPDDVKNSYIRVNGEPEIVYQ.

The protein belongs to the FARP (FMRFamide related peptide) family. In terms of tissue distribution, each flp gene is expressed in a distinct set of neurons.

The protein localises to the secreted. In terms of biological role, FMRFamides and FMRFamide-like peptides are neuropeptides. This chain is FMRFamide-like neuropeptide 23 (flp-23), found in Caenorhabditis elegans.